The chain runs to 121 residues: C-type natriuretic peptide 4 (121 aa).

An N-terminal signal peptide occupies residues 1–22 (MNLSYLVACGLLVTFLSDKMDA). A propeptide spanning residues 23–96 (QPLTPAQQKS…SRRHKSGSKK (74 aa)) is cleaved from the precursor. Positions 80–109 (LLNDQPASRRHKSGSKKGGSTSRSGCFGHK) are disordered. A disulfide bridge links Cys105 with Cys121.

It belongs to the natriuretic peptide family. As to expression, brain, spinal cord, spleen, heart and fin, and to a lower extent in gill and ovary.

It is found in the secreted. In terms of biological role, exhibits natriuretic and vasodepressant activity. Has cGMP-stimulating activity. May help to regulate body fluid homeostasis in a variety of aquatic environments. The protein is C-type natriuretic peptide 4 of Oryzias latipes (Japanese rice fish).